A 142-amino-acid chain; its full sequence is Large ribosomal subunit protein uL13 (142 aa).

This sequence belongs to the universal ribosomal protein uL13 family. In terms of assembly, part of the 50S ribosomal subunit.

Functionally, this protein is one of the early assembly proteins of the 50S ribosomal subunit, although it is not seen to bind rRNA by itself. It is important during the early stages of 50S assembly. The chain is Large ribosomal subunit protein uL13 from Desulfotalea psychrophila (strain LSv54 / DSM 12343).